Reading from the N-terminus, the 187-residue chain is CRISPR system Cmr subunit Cmr1-2 (187 aa).

The protein belongs to the CRISPR system Cmr1 family. As to quaternary structure, part of the type III-B Cmr ribonucleoprotein (RNP) complex. This is an elongated RNP with Cmr2 and Cmr3 as the base, with Cmr4 and Cmr5 forming a helical core along the mature crRNA (39 or 45 nt in length), while the complex is capped by Cmr6 and Cmr1. The 5' end of the crRNA is bound to Cmr2 and Cmr3, while Cmr6 and a Cmr1 subunit (Cmr1-1 or Cmr1-2) cap the 3' end of the crRNA. The target RNA lies antiparallel to the crRNA, with its 5' end near Cmr1 and Cmr6 and its 3' end near Cmr2 and Cmr3; major target cleavage occurs nears the junction of Cmr1/Cmr6 and Cmr4/Cmr, with minor cleavage occurring at 6 nt intervals which coincide with the proposed spacing of Cmr4 subunits.

Its subcellular location is the cytoplasm. CRISPR (clustered regularly interspaced short palindromic repeat), is an adaptive immune system that provides protection against mobile genetic elements (viruses, transposable elements and conjugative plasmids). CRISPR clusters contain sequences complementary to antecedent mobile elements and target invading nucleic acids. CRISPR clusters are transcribed and processed into CRISPR RNA (crRNA), formerly called psiRNA (prokaryotic silencing) in this organism. Part of the Cmr ribonucleoprotein complex which has divalent cation-dependent endoribonuclease activity specific for ssRNA complementary to the crRNA (target RNA), generating 5' hydroxy- and 3' phosphate or 2'-3' cyclic phosphate termini. Cmr4 is probably the subunit that cleaves target RNA. Cmr complex does not cleave ssDNA complementary to the crRNA. Cleavage of invading RNA is guided by the crRNA; substrate cleavage occurs a fixed distance (14 nt) from the 3' end of the crRNA. In vitro reconstitution shows Cmr1-2 and Cmr5 are not absolutely necessary for target cleavage. The sequence is that of CRISPR system Cmr subunit Cmr1-2 from Pyrococcus furiosus (strain ATCC 43587 / DSM 3638 / JCM 8422 / Vc1).